The sequence spans 132 residues: Small ribosomal subunit protein uS13 (132 aa).

Residues 101–125 (RGLPVRGQRTKTNARTRKGPRKTVA) show a composition bias toward basic residues. A disordered region spans residues 101-132 (RGLPVRGQRTKTNARTRKGPRKTVANKKIETR).

This sequence belongs to the universal ribosomal protein uS13 family. In terms of assembly, part of the 30S ribosomal subunit. Forms a loose heterodimer with protein S19. Forms two bridges to the 50S subunit in the 70S ribosome.

Located at the top of the head of the 30S subunit, it contacts several helices of the 16S rRNA. In the 70S ribosome it contacts the 23S rRNA (bridge B1a) and protein L5 of the 50S subunit (bridge B1b), connecting the 2 subunits; these bridges are implicated in subunit movement. Contacts the tRNAs in the A and P-sites. The polypeptide is Small ribosomal subunit protein uS13 (Ureaplasma urealyticum serovar 10 (strain ATCC 33699 / Western)).